We begin with the raw amino-acid sequence, 112 residues long: uncharacterized protein (112 aa).

2 consecutive transmembrane segments (helical) span residues 33–53 (IIGI…MIIF) and 69–89 (MNNI…HITV).

Its subcellular location is the membrane. This is an uncharacterized protein from Saccharomyces cerevisiae (strain ATCC 204508 / S288c) (Baker's yeast).